Consider the following 709-residue polypeptide: Protein IMPAIRED IN BABA-INDUCED STERILITY 1 (709 aa).

The N-myristoyl glycine moiety is linked to residue glycine 2. Residues 53–80 (SGKKSSSKKSGSELGSDFGELSESGRAS) form a disordered region. The Protein kinase domain occupies 131–418 (FEKLEKIGQG…ASTALVSQYF (288 aa)). ATP contacts are provided by residues 137-145 (IGQGTYSSV) and lysine 160. The active-site Proton acceptor is aspartate 255. 2 disordered regions span residues 434–536 (SPSK…PFSG) and 566–609 (SRGH…QDRE). Residues 437 to 449 (KEIDAKHREDTTR) show a composition bias toward basic and acidic residues. The segment covering 484-494 (HSQKFQKRNGH) has biased composition (basic residues). Positions 495–505 (SVHNSIDSDST) are enriched in polar residues. Composition is skewed to basic and acidic residues over residues 509-523 (KMQK…EASH) and 586-609 (VDSK…QDRE).

It belongs to the protein kinase superfamily. Ser/Thr protein kinase family.

Required for beta-aminobutyric acid (BABA)-induced resistance (BABA-IR) against bacteria (e.g. P.syringae) and oomycetes (e.g. H.parasitica) via priming for salicylate (SA)-dependent defense responses such as pathogenesis-related PR-1 gene expression and trailing necrosis. Involved in BABA-mediated sterility. Necessary for the inheritance of BABA-priming to next generation, especially for the primed to be primed phenotype which consists in an enhanced second BABA-priming in transgenerationally primed plants. This chain is Protein IMPAIRED IN BABA-INDUCED STERILITY 1, found in Arabidopsis thaliana (Mouse-ear cress).